We begin with the raw amino-acid sequence, 426 residues long: Serine hydroxymethyltransferase (426 aa).

Residues leucine 118 and 122–124 each bind (6S)-5,6,7,8-tetrahydrofolate; that span reads GHL. Lysine 227 carries the post-translational modification N6-(pyridoxal phosphate)lysine.

Belongs to the SHMT family. As to quaternary structure, homodimer. Pyridoxal 5'-phosphate is required as a cofactor.

Its subcellular location is the cytoplasm. The catalysed reaction is (6R)-5,10-methylene-5,6,7,8-tetrahydrofolate + glycine + H2O = (6S)-5,6,7,8-tetrahydrofolate + L-serine. It functions in the pathway one-carbon metabolism; tetrahydrofolate interconversion. Its pathway is amino-acid biosynthesis; glycine biosynthesis; glycine from L-serine: step 1/1. Its function is as follows. Catalyzes the reversible interconversion of serine and glycine with tetrahydrofolate (THF) serving as the one-carbon carrier. This reaction serves as the major source of one-carbon groups required for the biosynthesis of purines, thymidylate, methionine, and other important biomolecules. Also exhibits THF-independent aldolase activity toward beta-hydroxyamino acids, producing glycine and aldehydes, via a retro-aldol mechanism. This Mycobacterium leprae (strain Br4923) protein is Serine hydroxymethyltransferase.